Reading from the N-terminus, the 398-residue chain is Minor capsid protein (398 aa).

The interval 359-398 is disordered; it reads EEASVTSTEETLTPAQEAARTRAANKARKEAELAAATAEQ. Positions 362-372 are enriched in polar residues; it reads SVTSTEETLTP. A compositionally biased stretch (low complexity) spans 373–382; sequence AQEAARTRAA.

This sequence belongs to the T7virus minor capsid protein family. As to quaternary structure, interacts with the connector protein and the major capsid protein.

It localises to the virion. Its function is as follows. Assembles with the major capsid protein to form an icosahedral capsid with a T=7 symmetry, about 60 nm in diameter, and consisting of 415 capsid proteins. The major and minor capsid proteins are incorporated into the capsid in about a 90/10 ratio respectively. Once the capsid formed, encapsidates one single copy of the viral genome. The polypeptide is Minor capsid protein (Escherichia coli (Bacteriophage T7)).